The primary structure comprises 366 residues: MQEIPAILVLENGSVYRGTAFGHAGEATGEVVFNTSLTGYQEILTDPSYTGQMVVMTYPLIGNYGITPNDNESKKIWASALIVREASNVYSNYESTRSLDATLKEAGVMGLAGIDTRKLVREIRQKGAMRAVISTLCDDVAALKAQAAAIPEMTGLDLVQRVTTGERYTVDNPDAKYHVVAFDYGIKTNIIRQLNAEGCKVTVVNAKTTADEVLAMNPDGIFLSNGPGDPFAVTYAIDTIRELAARNSTLPIFGICLGHQLLSLAFGAKTYKLKFGHHGANHPVKNLLSNTIEITSQNHGFAVEMESLPGELELTHKNLYDMTVEGIRHRELPCFSVQYHPEAAPGPHDSHYLFKEFTELMERLKN.

The segment at 1–174 is CPSase; it reads MQEIPAILVL…GERYTVDNPD (174 aa). Residues Ser-48, Gly-226, and Gly-228 each contribute to the L-glutamine site. The 189-residue stretch at 178–366 folds into the Glutamine amidotransferase type-1 domain; that stretch reads HVVAFDYGIK…FTELMERLKN (189 aa). Residue Cys-256 is the Nucleophile of the active site. Residues Leu-257, Gln-260, Asn-298, Gly-300, and Phe-301 each contribute to the L-glutamine site. Catalysis depends on residues His-340 and Glu-342.

It belongs to the CarA family. As to quaternary structure, composed of two chains; the small (or glutamine) chain promotes the hydrolysis of glutamine to ammonia, which is used by the large (or ammonia) chain to synthesize carbamoyl phosphate. Tetramer of heterodimers (alpha,beta)4.

It catalyses the reaction hydrogencarbonate + L-glutamine + 2 ATP + H2O = carbamoyl phosphate + L-glutamate + 2 ADP + phosphate + 2 H(+). The catalysed reaction is L-glutamine + H2O = L-glutamate + NH4(+). The protein operates within amino-acid biosynthesis; L-arginine biosynthesis; carbamoyl phosphate from bicarbonate: step 1/1. It participates in pyrimidine metabolism; UMP biosynthesis via de novo pathway; (S)-dihydroorotate from bicarbonate: step 1/3. In terms of biological role, small subunit of the glutamine-dependent carbamoyl phosphate synthetase (CPSase). CPSase catalyzes the formation of carbamoyl phosphate from the ammonia moiety of glutamine, carbonate, and phosphate donated by ATP, constituting the first step of 2 biosynthetic pathways, one leading to arginine and/or urea and the other to pyrimidine nucleotides. The small subunit (glutamine amidotransferase) binds and cleaves glutamine to supply the large subunit with the substrate ammonia. This Chlorobaculum tepidum (strain ATCC 49652 / DSM 12025 / NBRC 103806 / TLS) (Chlorobium tepidum) protein is Carbamoyl phosphate synthase small chain.